We begin with the raw amino-acid sequence, 733 residues long: Ribosomal protein S6 kinase alpha-2 (733 aa).

The Protein kinase 1 domain maps to 59-318 (FELLKVLGQG…VEEIKRHPFF (260 aa)). ATP contacts are provided by residues 65-73 (LGQGSYGKV) and K91. D184 acts as the Proton acceptor in catalysis. S218 is modified (phosphoserine; by PDPK1). Residues 319–388 (VTIDWNKLYR…VASSLVQEPS (70 aa)) form the AGC-kinase C-terminal domain. S377 bears the Phosphoserine mark. Positions 415–672 (YEIKEDIGVG…AVQVLKHPWI (258 aa)) constitute a Protein kinase 2 domain. ATP-binding positions include 421–429 (IGVGSYSVC) and K444. D532 (proton acceptor) is an active-site residue.

The protein belongs to the protein kinase superfamily. AGC Ser/Thr protein kinase family. S6 kinase subfamily. Forms a complex with either MAPK1/ERK2 or MAPK3/ERK1 in quiescent cells. Transiently dissociates following mitogenic stimulation. Interacts with FBXO5; cooperate to induce the metaphase arrest of early blastomeres; increases and stabilizes interaction of FBXO5 with CDC20. Mg(2+) is required as a cofactor. In terms of processing, activated by phosphorylation at Ser-218 by PDPK1. Autophosphorylated on Ser-377, as part of the activation process. May be phosphorylated at Thr-356 and Ser-360 by MAPK1/ERK2 and MAPK3/ERK1. N-terminal myristoylation results in an activated kinase in the absence of added growth factors.

It localises to the nucleus. The protein resides in the cytoplasm. The catalysed reaction is L-seryl-[protein] + ATP = O-phospho-L-seryl-[protein] + ADP + H(+). It catalyses the reaction L-threonyl-[protein] + ATP = O-phospho-L-threonyl-[protein] + ADP + H(+). With respect to regulation, upon extracellular signal or mitogen stimulation, phosphorylated at Thr-570 in the C-terminal kinase domain (CTKD) by MAPK1/ERK2 and MAPK3/ERK1. The activated CTKD then autophosphorylates Ser-377, allowing binding of PDPK1, which in turn phosphorylates Ser-218 in the N-terminal kinase domain (NTDK) leading to the full activation of the protein and subsequent phosphorylation of the substrates by the NTKD. Functionally, serine/threonine-protein kinase that acts downstream of ERK (MAPK1/ERK2 and MAPK3/ERK1) signaling and mediates mitogenic and stress-induced activation of transcription factors, regulates translation, and mediates cellular proliferation, survival, and differentiation. May function as tumor suppressor in epithelial ovarian cancer cells. This Mus musculus (Mouse) protein is Ribosomal protein S6 kinase alpha-2 (Rps6ka2).